The sequence spans 90 residues: Phosphocarrier protein NPr (90 aa).

Positions 2 to 90 constitute an HPr domain; it reads TVKQTVEITN…ALFNSGFDED (89 aa). The active-site Pros-phosphohistidine intermediate is H16.

The protein belongs to the HPr family.

It is found in the cytoplasm. Its function is as follows. Component of the phosphoenolpyruvate-dependent nitrogen-metabolic phosphotransferase system (nitrogen-metabolic PTS), that seems to be involved in regulating nitrogen metabolism. The phosphoryl group from phosphoenolpyruvate (PEP) is transferred to the phosphoryl carrier protein NPr by enzyme I-Ntr. Phospho-NPr then transfers it to EIIA-Ntr. Could function in the transcriptional regulation of sigma-54 dependent operons in conjunction with the NPr (PtsO) and EIIA-Ntr (PtsN) proteins. This is Phosphocarrier protein NPr (ptsO) from Escherichia coli O157:H7.